Reading from the N-terminus, the 268-residue chain is UPF0294 protein ETA_26410 (268 aa).

It belongs to the UPF0294 family.

The protein localises to the cytoplasm. This Erwinia tasmaniensis (strain DSM 17950 / CFBP 7177 / CIP 109463 / NCPPB 4357 / Et1/99) protein is UPF0294 protein ETA_26410.